Here is an 82-residue protein sequence, read N- to C-terminus: Small ribosomal subunit protein uS17 (82 aa).

Belongs to the universal ribosomal protein uS17 family. Part of the 30S ribosomal subunit.

Functionally, one of the primary rRNA binding proteins, it binds specifically to the 5'-end of 16S ribosomal RNA. This Shewanella sp. (strain W3-18-1) protein is Small ribosomal subunit protein uS17.